A 497-amino-acid polypeptide reads, in one-letter code: Probable polyamine oxidase 4 (497 aa).

Positions 58, 66, 247, and 435 each coordinate FAD. A Microbody targeting signal motif is present at residues 495 to 497 (SRM).

The protein belongs to the flavin monoamine oxidase family. Requires FAD as cofactor. In terms of tissue distribution, highly expressed in roots, flowers and greening cotelydons. Lower expression in other tissues.

The protein resides in the peroxisome. The enzyme catalyses spermine + O2 + H2O = 3-aminopropanal + spermidine + H2O2. It catalyses the reaction spermidine + O2 + H2O = 3-aminopropanal + putrescine + H2O2. The protein operates within amine and polyamine degradation; spermine degradation. Its pathway is amine and polyamine degradation; spermidine degradation. Its function is as follows. Flavoenzyme involved in polyamine back-conversion. Catalyzes the oxidation of the secondary amino group of polyamines, such as spermine and spermidine. Substrate preference is spermine &gt; spermidine. No activity detected when putrescine or N(1)-acetylspermine are used as substrates. Plays an important role in the regulation of polyamine intracellular concentration. In Arabidopsis thaliana (Mouse-ear cress), this protein is Probable polyamine oxidase 4 (PAO4).